Consider the following 245-residue polypeptide: Terpene cyclase esdpB (245 aa).

Transmembrane regions (helical) follow at residues 19–39, 48–68, 75–95, 112–132, 140–160, 177–197, and 208–228; these read MVAS…VTTI, SGVT…FAVI, IAAL…YVSV, LPVV…ALSM, LYWG…GLLI, FIAS…WPSA, and WLSG…YHIS.

It belongs to the paxB family.

The protein localises to the membrane. The protein operates within secondary metabolite biosynthesis; terpenoid biosynthesis. Its function is as follows. Terpene cyclase; part of the cluster that mediates the biosynthesis of shearones, diterpenoid pyrones (DPs) which are structurally diverse meroterpenoids consisting of a diterpene linked by a pyrone, and which may exhibit a range of bioactivities. Within the pathway, esdpB takes part to the biosynthesis of the molecular scaffold by catalyzing the cyclization of the prenyl group initiated by protonation and ring-opening of the epoxide to produce the diterpenoid pyrone scaffold. The molecular scaffold is commonly biosynthesized by a series of enzymes including the non-reducing polyketide synthase (NR-PKS) esdpA that generates an alpha-pyrone; the prenyltransferase esdpC that attaches a geranylgeranyl pyrophosphate (GGPP) produced by the GGPP synthase (GGPPS) esdpD onto the pyrone unit; the FAD-dependent monooxygenase esdpE that converts an olefin on the diterpene unit into an epoxide; and the terpene cyclase esdpB that catalyzes the cyclization reactions to give the molecular backbone shearone A. In the modification steps, esdpF oxidizes the hydroxy group to a ketone at C-3 and esdpG then attaches hydroxy groups at both C-11 and C-12. After that, esdpI hydroxylates at C-20 and esdpH hydroxylates at C-6'. The ether bridge is generated by nucleophilic attack of the hydroxy group at C-20 to the carbonyl carbon at C-3. EsdpH can also functions prior to esdpI. The different combinations of these modification enzymes lead to the production of diverse shearone derivatives, shearone I being the end product of the pathway. The alpha-ketoglutarate-dependent dioxygenase esdpJ seems not to be involved in this pathway. In Penicillium shearii (Eupenicillium shearii), this protein is Terpene cyclase esdpB.